Reading from the N-terminus, the 177-residue chain is RNA pyrophosphohydrolase (177 aa).

Residues 6 to 149 (GYRPNVGIVI…KRDVYRRVMK (144 aa)) enclose the Nudix hydrolase domain. A Nudix box motif is present at residues 38 to 59 (GGINAGETAEQAMYRELFEEVG).

It belongs to the Nudix hydrolase family. RppH subfamily. A divalent metal cation serves as cofactor.

Its function is as follows. Accelerates the degradation of transcripts by removing pyrophosphate from the 5'-end of triphosphorylated RNA, leading to a more labile monophosphorylated state that can stimulate subsequent ribonuclease cleavage. The chain is RNA pyrophosphohydrolase from Edwardsiella ictaluri (strain 93-146).